Consider the following 223-residue polypeptide: Neurotrophic factor BDNF precursor form (223 aa).

The first 5 residues, 1–5, serve as a signal peptide directing secretion; it reads SCMKA. A propeptide spanning residues 6–114 is cleaved from the precursor; the sequence is APMKEVSIRG…AANMSMRVRR (109 aa). N-linked (GlcNAc...) asparagine glycosylation occurs at N107. Cystine bridges form between C127–C194 and C172–C223.

This sequence belongs to the NGF-beta family.

It localises to the secreted. Promotes the survival of neuronal populations that are all located either in the central nervous system or directly connected to it. This is Neurotrophic factor BDNF precursor form (BDNF) from Aspidites melanocephalus (Black-headed python).